The sequence spans 915 residues: Metabotropic glutamate receptor 7 (915 aa).

An N-terminal signal peptide occupies residues 1–34 (MVQLGKLLRVLTLMKFPCCVLEVLLCVLAAAARG). Residues 35–590 (QEMYAPHSIR…IIKLEWHSPW (556 aa)) are Extracellular-facing. Cys-67 and Cys-109 are disulfide-bonded. An N-linked (GlcNAc...) asparagine glycan is attached at Asn-98. Residues Ser-159, 180–182 (AST), Tyr-230, and Asp-314 contribute to the L-glutamate site. 7 disulfides stabilise this stretch: Cys-249–Cys-541, Cys-374–Cys-390, Cys-430–Cys-437, Cys-523–Cys-542, Cys-527–Cys-545, Cys-548–Cys-560, and Cys-563–Cys-576. Lys-407 contacts L-glutamate. Asn-458 and Asn-486 each carry an N-linked (GlcNAc...) asparagine glycan. N-linked (GlcNAc...) asparagine glycosylation is present at Asn-572. The chain crosses the membrane as a helical span at residues 591–615 (AVIPVFLAMLGIIATIFVMATFIRY). At 616–627 (NDTPIVRASGRE) the chain is on the cytoplasmic side. Residues 628–648 (LSYVLLTGIFLCYIITFLMIA) traverse the membrane as a helical segment. Residues 649 to 654 (KPDVAV) lie on the Extracellular side of the membrane. Residues 655 to 675 (CSFRRVFLGLGMCISYAALLT) traverse the membrane as a helical segment. At 676 to 702 (KTNRIYRIFEQGKKSVTAPRLISPTSQ) the chain is on the cytoplasmic side. The chain crosses the membrane as a helical span at residues 703–723 (LAITSSLISVQLLGVFIWFGV). Residues 724-753 (DPPNIIIDYDEHKTMNPEQARGVLKCDITD) are Extracellular-facing. Residues 754 to 775 (LQIICSLGYSILLMVTCTVYAI) traverse the membrane as a helical segment. The Cytoplasmic portion of the chain corresponds to 776-788 (KTRGVPENFNEAK). Residues 789 to 810 (PIGFTMYTTCIVWLAFIPIFFG) form a helical membrane-spanning segment. Residues 811–825 (TAQSAEKLYIQTTTL) are Extracellular-facing. The helical transmembrane segment at 826-850 (TISMNLSASVALGMLYMPKVYIIIF) threads the bilayer. Residues 851–915 (HPELNVQKRK…KYVSYNNLVI (65 aa)) are Cytoplasmic-facing. The tract at residues 874–895 (SRLSHKPSDRPNGEAKTELCEN) is disordered. A compositionally biased stretch (basic and acidic residues) spans 879–892 (KPSDRPNGEAKTEL). Ser-900 carries the post-translational modification Phosphoserine.

It belongs to the G-protein coupled receptor 3 family. Homodimer. Interacts with PICK1. As to expression, widely distributed throughout the brain.

Its subcellular location is the cell membrane. Functionally, G-protein coupled receptor activated by glutamate that regulates axon outgrowth through the MAPK-cAMP-PKA signaling pathway during neuronal development. Ligand binding causes a conformation change that triggers signaling via guanine nucleotide-binding proteins (G proteins) and modulates the activity of downstream effectors, such as adenylate cyclase that it inhibits. The protein is Metabotropic glutamate receptor 7 (Grm7) of Rattus norvegicus (Rat).